Here is a 266-residue protein sequence, read N- to C-terminus: Undecaprenyl-diphosphatase (266 aa).

7 consecutive transmembrane segments (helical) span residues 8–28 (VLAL…AHLI), 39–59 (QGLA…VIYF), 87–107 (WAVG…HDII), 113–133 (SAQV…FADV), 188–208 (SFLL…LGLV), 219–239 (MIVL…HYFL), and 246–266 (TMLP…FLFW).

This sequence belongs to the UppP family.

Its subcellular location is the cell inner membrane. It carries out the reaction di-trans,octa-cis-undecaprenyl diphosphate + H2O = di-trans,octa-cis-undecaprenyl phosphate + phosphate + H(+). Its function is as follows. Catalyzes the dephosphorylation of undecaprenyl diphosphate (UPP). Confers resistance to bacitracin. The polypeptide is Undecaprenyl-diphosphatase (Thioalkalivibrio sulfidiphilus (strain HL-EbGR7)).